A 353-amino-acid polypeptide reads, in one-letter code: Lipase chaperone (353 aa).

A helical transmembrane segment spans residues 12–32; that stretch reads IVLYLILGCVVVCGVWYSFDV.

Belongs to the lipase chaperone family.

The protein resides in the cell inner membrane. May be involved in the folding of the extracellular lipase during its passage through the periplasm. This chain is Lipase chaperone, found in Xylella fastidiosa (strain M23).